A 338-amino-acid chain; its full sequence is Lipoate-protein ligase A (338 aa).

Positions 29-216 (DPNQRVLFLW…AFFAHYGARV (188 aa)) constitute a BPL/LPL catalytic domain. Residues arginine 71, 76-79 (GAVF), and lysine 134 each bind ATP. Residue lysine 134 coordinates (R)-lipoate.

It belongs to the LplA family. As to quaternary structure, monomer.

It localises to the cytoplasm. The catalysed reaction is L-lysyl-[lipoyl-carrier protein] + (R)-lipoate + ATP = N(6)-[(R)-lipoyl]-L-lysyl-[lipoyl-carrier protein] + AMP + diphosphate + H(+). The protein operates within protein modification; protein lipoylation via exogenous pathway; protein N(6)-(lipoyl)lysine from lipoate: step 1/2. It participates in protein modification; protein lipoylation via exogenous pathway; protein N(6)-(lipoyl)lysine from lipoate: step 2/2. In terms of biological role, catalyzes both the ATP-dependent activation of exogenously supplied lipoate to lipoyl-AMP and the transfer of the activated lipoyl onto the lipoyl domains of lipoate-dependent enzymes. The chain is Lipoate-protein ligase A from Aeromonas salmonicida (strain A449).